A 66-amino-acid polypeptide reads, in one-letter code: Trypsin inhibitor (66 aa).

Intrachain disulfides connect C5-C28, C16-C44, C19-C58, C21-C38, and C43-C64.

The protein resides in the secreted. The protein is Trypsin inhibitor of Ascaris suum (Pig roundworm).